Consider the following 820-residue polypeptide: Catenin beta (820 aa).

The segment covering 1-16 (MEQARYSNQQSVNPQQ) has biased composition (polar residues). Residues 1–74 (MEQARYSNQQ…SRHEDGGEEA (74 aa)) form a disordered region. Positions 52 to 63 (SSATSHPPSVSS) are enriched in low complexity. ARM repeat units follow at residues 157–196 (NYQD…QLSK), 199–239 (ASRH…NLSH), 241–280 (RAGL…NLLL), 283–322 (EGSK…ILAY), 367–405 (HNNK…RNLS), 406–445 (DCHR…NLTC), 448–489 (SRNK…HVTS), 495–535 (EMGQ…NLAL), 603–642 (SHNR…ELSL), and 644–683 (KQGA…RMSD). The interval 708–811 (PWGDPLDMPS…LDSIPPADNT (104 aa)) is disordered. Low complexity predominate over residues 785–796 (GMDPGLPDMGPP).

Belongs to the beta-catenin family.

It localises to the cytoplasm. Its subcellular location is the cytoskeleton. Functionally, binds to the cytoplasmic domain of the cell-cell adhesion molecule E-cadherin, and perhaps to other (membrane) proteins. The association of catenins to cadherins produces a complex which is linked to the actin filament network, and which seems to be of primary importance for cadherins cell-adhesion properties. The chain is Catenin beta from Tripneustes gratilla (Hawaian sea urchin).